A 376-amino-acid polypeptide reads, in one-letter code: Germination-specific cysteine protease 1 (376 aa).

Residues 1 to 22 (MAPSTKVLSLLLLYVVVSLASG) form the signal peptide. Positions 23-144 (DESIINDHLQ…KYSAAVNGKE (122 aa)) are cleaved as a propeptide — activation peptide. N-linked (GlcNAc...) asparagine glycosylation is present at Asn-93. 3 disulfide bridges follow: Cys-166-Cys-208, Cys-200-Cys-241, and Cys-299-Cys-351. Cys-169 is an active-site residue. Catalysis depends on residues His-305 and Asn-325.

It belongs to the peptidase C1 family.

Its function is as follows. Probable thiol protease. This Arabidopsis thaliana (Mouse-ear cress) protein is Germination-specific cysteine protease 1.